A 219-amino-acid polypeptide reads, in one-letter code: Rho-related protein racN (219 aa).

12 to 19 (GDVTIGKT) contacts GTP. An Effector region motif is present at residues 33–41 (YIPTIFDNH). GTP-binding positions include 58–62 (DTGGG) and 114–117 (TKTD). Residue C216 is modified to Cysteine methyl ester. The S-geranylgeranyl cysteine moiety is linked to residue C216. Residues 217–219 (IIC) constitute a propeptide, removed in mature form.

Belongs to the small GTPase superfamily. Rho family.

The protein localises to the cell membrane. In Dictyostelium discoideum (Social amoeba), this protein is Rho-related protein racN (racN).